The following is a 52-amino-acid chain: MSSTANAIADAFLGVLNALAPIIEGATEIITFMALTYVMTMVIARILGGLFV.

The next 2 helical transmembrane spans lie at 11-31 (AFLGVLNALAPIIEGATEIIT) and 32-52 (FMALTYVMTMVIARILGGLFV).

The protein localises to the host membrane. The polypeptide is Transmembrane protein ORF52 (Acidianus filamentous virus 1 (isolate United States/Yellowstone) (AFV-1)).